The following is a 119-amino-acid chain: Protein GSKIP homolog (119 aa).

Belongs to the GSKIP family.

The protein is Protein GSKIP homolog of Drosophila melanogaster (Fruit fly).